The chain runs to 459 residues: MDDPNSYDVIIVGTNLRNSILSAALSWANQRVLHIDENSFYGEIDGSLTLRDLEQINEKIKKVDSSQILNDNGSHKSPLKRFEVQFLNKDLIPKNKGSVIQFHPQEIFASSELVKLLSETKIYKYLLLKPARSFRLLTSNEEWIKVPESRADIFNNKNLSLASKRIVMRFMKFVSNIADEQNQNLVKEWESKPFYKFLEEVFQLSGAIEESIIYGLCQSLSKDIPTKDALDTVLKYFHSFGMYGDYSYLLAMYGTGSELCQGFCRSSAVMGGTFMLGQAIDKIDESKIVLKDGSTLSAKKIVSSVDEGKLPHQQIQQRYLLVKGDCQQLFQEDGFFAALDASLIHFSPFSISENFGNSVQAKLYGSGSGDCPEGYCIWYLKTLNDSPCNEVFNLATKKLCSFSGCDDLEIIVQVDETLNQLRHIDYDDTLHSAKSLFYEILGQNNTFLQREGLFDEDDE.

It belongs to the Rab GDI family.

It is found in the cytoplasm. The protein resides in the nucleus. This is an uncharacterized protein from Schizosaccharomyces pombe (strain 972 / ATCC 24843) (Fission yeast).